Here is a 238-residue protein sequence, read N- to C-terminus: MRHLHHQTSQTKLWAVIPAAGSGSRFSKTELKQYQYIQDATVIEHTVKRLSQLPLTGYVLAIGKQDTFASTLSFQDKHKAHFCNGGVERVHSVLNALNYLSQIADEDDWVLVHDAARPCVTFECLNTLVKNAIETNQSAILAIPVRDTLKQVNQEQQIDKTVSRELLWQAQTPQIAKIGILKKAIETALKNNLTITDEASALESIGESVQVVMGRSDNIKITYPDDLELARLILQSQN.

Belongs to the IspD/TarI cytidylyltransferase family. IspD subfamily.

The catalysed reaction is 2-C-methyl-D-erythritol 4-phosphate + CTP + H(+) = 4-CDP-2-C-methyl-D-erythritol + diphosphate. Its pathway is isoprenoid biosynthesis; isopentenyl diphosphate biosynthesis via DXP pathway; isopentenyl diphosphate from 1-deoxy-D-xylulose 5-phosphate: step 2/6. Functionally, catalyzes the formation of 4-diphosphocytidyl-2-C-methyl-D-erythritol from CTP and 2-C-methyl-D-erythritol 4-phosphate (MEP). The protein is 2-C-methyl-D-erythritol 4-phosphate cytidylyltransferase of Acinetobacter baumannii (strain AYE).